A 90-amino-acid polypeptide reads, in one-letter code: UPF0237 protein MJ1558 (90 aa).

The 75-residue stretch at 5–79 (VVSVIGQDRT…EELGVQVIVQ (75 aa)) folds into the ACT domain.

It belongs to the UPF0237 family.

The chain is UPF0237 protein MJ1558 from Methanocaldococcus jannaschii (strain ATCC 43067 / DSM 2661 / JAL-1 / JCM 10045 / NBRC 100440) (Methanococcus jannaschii).